Consider the following 266-residue polypeptide: Ribosomal RNA small subunit methyltransferase A (266 aa).

S-adenosyl-L-methionine contacts are provided by N10, I12, G37, E58, D82, and N105.

This sequence belongs to the class I-like SAM-binding methyltransferase superfamily. rRNA adenine N(6)-methyltransferase family. RsmA subfamily.

Its subcellular location is the cytoplasm. It catalyses the reaction adenosine(1518)/adenosine(1519) in 16S rRNA + 4 S-adenosyl-L-methionine = N(6)-dimethyladenosine(1518)/N(6)-dimethyladenosine(1519) in 16S rRNA + 4 S-adenosyl-L-homocysteine + 4 H(+). Functionally, specifically dimethylates two adjacent adenosines (A1518 and A1519) in the loop of a conserved hairpin near the 3'-end of 16S rRNA in the 30S particle. May play a critical role in biogenesis of 30S subunits. The protein is Ribosomal RNA small subunit methyltransferase A of Mycoplasma mycoides subsp. mycoides SC (strain CCUG 32753 / NCTC 10114 / PG1).